The primary structure comprises 218 residues: UPF0598 protein C8orf82 homolog (218 aa).

The protein belongs to the UPF0598 family.

The chain is UPF0598 protein C8orf82 homolog from Rattus norvegicus (Rat).